Reading from the N-terminus, the 72-residue chain is Translation initiation factor IF-1 (72 aa).

The region spanning 1 to 72 (MAKEETIQMQ…SRARITFRAK (72 aa)) is the S1-like domain.

This sequence belongs to the IF-1 family. In terms of assembly, component of the 30S ribosomal translation pre-initiation complex which assembles on the 30S ribosome in the order IF-2 and IF-3, IF-1 and N-formylmethionyl-tRNA(fMet); mRNA recruitment can occur at any time during PIC assembly.

It localises to the cytoplasm. Functionally, one of the essential components for the initiation of protein synthesis. Stabilizes the binding of IF-2 and IF-3 on the 30S subunit to which N-formylmethionyl-tRNA(fMet) subsequently binds. Helps modulate mRNA selection, yielding the 30S pre-initiation complex (PIC). Upon addition of the 50S ribosomal subunit IF-1, IF-2 and IF-3 are released leaving the mature 70S translation initiation complex. This Nitrosospira multiformis (strain ATCC 25196 / NCIMB 11849 / C 71) protein is Translation initiation factor IF-1.